The primary structure comprises 130 residues: Small ribosomal subunit protein uS9 (130 aa).

This sequence belongs to the universal ribosomal protein uS9 family.

This Alkalilimnicola ehrlichii (strain ATCC BAA-1101 / DSM 17681 / MLHE-1) protein is Small ribosomal subunit protein uS9.